A 374-amino-acid polypeptide reads, in one-letter code: Alcohol dehydrogenase S chain (374 aa).

Ser-2 is subject to N-acetylserine. Zn(2+)-binding residues include Cys-47, His-68, Cys-98, Cys-101, Cys-104, Cys-112, and Cys-174. Residues 199–204 (GLGGVG), Asp-223, Lys-228, 292–294 (VGV), and Arg-369 contribute to the NAD(+) site.

It belongs to the zinc-containing alcohol dehydrogenase family. Class-I subfamily. As to quaternary structure, dimer of identical or non-identical chains of two types (E and S) coded by 2 separate genes at different loci. Zn(2+) serves as cofactor.

The protein resides in the cytoplasm. The catalysed reaction is a primary alcohol + NAD(+) = an aldehyde + NADH + H(+). It carries out the reaction a secondary alcohol + NAD(+) = a ketone + NADH + H(+). The polypeptide is Alcohol dehydrogenase S chain (Equus caballus (Horse)).